The following is a 693-amino-acid chain: MESKPSRIPRRISVQPSGSLSTRMVSGNRGTSLNDSYHSRDSSFRLDSEYQSASASACASPCQPAWYSESEIPQGARARAQTQQRDHDSKRPKLSCTNCASTSAGRNGGSGLNTVSDSSWRHSQVPRSSSMVLGSFGTDLMRERRDLDRRRESSISNLMDYNHRSGDFTTSSYVQERVPSSYSQGARPKENAVSTLQLNSSSTNHQLPSDHQTVPSSRDSSRSSFRSHFSPRQSESFRNSSHPAFSYFSSRNETPTISNSERGSSQRPYRESSDNEGRRTTRRLLSRIASSMSSTFFSRRSSQDSLNTRSLSSENYISPRTLTSQSRNNGTSSSSDVSEGRAAEASQGFRFLRRRWGLSSLSQNHSSEPEAENFNQESEGRNSGPWLSSSLRNRCTPLFSRRRREGRDESSRMSTSDVPPRSHIFRRDSNEVVHLEAQGDSLGAAANRPQASGASSSAAAGGSTPELPQGGRNPGLTGILPGSLFRFAVPPALGSNLADNVMITVDIIPSGWNSTDGKNDKAKSAPSRDPEKLQKIKESLLLEDSDDEEEGDLCRICQMAAASSSNLLIEPCKCTGSLQYVHQECMKKWLQAKINSGSSLEAVTTCELCKEKLQLNLEDFDIHELHRAHANEQAEYEFISSGLYLVVLLHLCEQSFSDMMGNTIEPSTRVRFINLARTLQAHMEDLETSEDEF.

Met1 is subject to N-acetylmethionine. Disordered stretches follow at residues Met1 to Ser43, Glu69 to Phe136, Leu158 to Thr281, Phe296 to Ala342, Leu361 to Asn430, Ala445 to Gly475, and Trp512 to Leu533. 5 stretches are compositionally biased toward polar residues: residues Val14–Ser36, Ser95–Gly105, Leu112–Val132, Asp167–Gln184, and Ala192–Pro215. A compositionally biased stretch (low complexity) spans Ser216 to Ser234. A compositionally biased stretch (polar residues) spans Ser236–Arg267. A compositionally biased stretch (basic and acidic residues) spans Pro268–Arg279. Over residues Phe296–Ser305 the composition is skewed to low complexity. The segment covering Leu306–Thr323 has biased composition (polar residues). Ser318 carries the post-translational modification Phosphoserine. Positions Ser324–Val337 are enriched in low complexity. Ser390 is modified (phosphoserine). Positions Ala451–Ser463 are enriched in low complexity. The span at Gly517–Leu533 shows a compositional bias: basic and acidic residues. The RING-CH-type zinc-finger motif lies at Asp546–Asn616. Zn(2+)-binding residues include Cys554, Cys557, Cys572, Cys574, His582, Cys585, Cys606, and Cys609. Thr688 is modified (phosphothreonine). Ser689 carries the phosphoserine modification.

Expressed in brain, thymus, muscle and kidney.

It localises to the cytoplasm. The enzyme catalyses S-ubiquitinyl-[E2 ubiquitin-conjugating enzyme]-L-cysteine + [acceptor protein]-L-lysine = [E2 ubiquitin-conjugating enzyme]-L-cysteine + N(6)-ubiquitinyl-[acceptor protein]-L-lysine.. Its pathway is protein modification; protein ubiquitination. In terms of biological role, E3 ubiquitin-protein ligase which may specifically enhance the E2 activity of HIP2. E3 ubiquitin ligases accept ubiquitin from an E2 ubiquitin-conjugating enzyme in the form of a thioester and then directly transfer the ubiquitin to targeted substrates. May be involved in T-cell proliferation by regulating LIF secretion. May play a role in lysosome homeostasis. Promotes 'Lys-6', 'Lys-11' and 'Lys-63'-linked mixed polyubiquitination on ATG14 leading to the inhibition of autophagy by impairing the interaction between ATG14 and STX7. Participates in the dopamine-mediated negative regulation of the NLRP3 inflammasome by promoting its uibiquitination and subsequent degradation. This chain is E3 ubiquitin-protein ligase MARCHF7 (Marchf7), found in Mus musculus (Mouse).